The chain runs to 130 residues: Small ribosomal subunit protein uS8 (130 aa).

This sequence belongs to the universal ribosomal protein uS8 family. In terms of assembly, part of the 30S ribosomal subunit.

Functionally, one of the primary rRNA binding proteins, it binds directly to 16S rRNA central domain where it helps coordinate assembly of the platform of the 30S subunit. In Methanococcoides burtonii (strain DSM 6242 / NBRC 107633 / OCM 468 / ACE-M), this protein is Small ribosomal subunit protein uS8.